The primary structure comprises 336 residues: Casein kinase I isoform beta (336 aa).

In terms of domain architecture, Protein kinase spans 17 to 285 (YKLVREIGFG…YLRQLFRLLF (269 aa)). Residues 23–31 (IGFGSFGHV) and Lys46 contribute to the ATP site. Asp136 serves as the catalytic Proton acceptor. Residues 309–320 (ASSSSGEGQQAQ) show a composition bias toward low complexity. The disordered stretch occupies residues 309 to 336 (ASSSSGEGQQAQTPTGKSDNTKSEMKHS). A compositionally biased stretch (basic and acidic residues) spans 327–336 (DNTKSEMKHS).

The protein belongs to the protein kinase superfamily. CK1 Ser/Thr protein kinase family. Casein kinase I subfamily. Monomer.

It is found in the cytoplasm. It carries out the reaction L-seryl-[protein] + ATP = O-phospho-L-seryl-[protein] + ADP + H(+). The enzyme catalyses L-threonyl-[protein] + ATP = O-phospho-L-threonyl-[protein] + ADP + H(+). Functionally, casein kinases are operationally defined by their preferential utilization of acidic proteins such as caseins as substrates. It can phosphorylate a large number of proteins. Participates in Wnt signaling. The polypeptide is Casein kinase I isoform beta (CSNK1B) (Bos taurus (Bovine)).